Here is a 228-residue protein sequence, read N- to C-terminus: Protein ARV 2 (228 aa).

2 consecutive transmembrane segments (helical) span residues 37–57 and 80–100; these read EVAD…LILH and LLWK…LLLR. An N-linked (GlcNAc...) asparagine glycan is attached at Asn107. The next 3 helical transmembrane spans lie at 123 to 143, 150 to 170, and 176 to 196; these read VLSA…LMLV, ILLT…MPVW, and VIFI…KVMT.

It belongs to the ARV1 family. In terms of tissue distribution, restricted to tissues in which cells are actively dividing or expanding. Mostly expressed in roots and flowers, and, to a lower extent, in stems and leaves.

Its subcellular location is the endoplasmic reticulum membrane. In terms of biological role, mediator of sterol homeostasis involved in sterol uptake, trafficking and distribution into membranes. Also regulates the sphingolipid metabolism. The sequence is that of Protein ARV 2 from Arabidopsis thaliana (Mouse-ear cress).